The chain runs to 95 residues: Phosphoribosyl-ATP pyrophosphatase (95 aa).

Belongs to the PRA-PH family.

It localises to the cytoplasm. The enzyme catalyses 1-(5-phospho-beta-D-ribosyl)-ATP + H2O = 1-(5-phospho-beta-D-ribosyl)-5'-AMP + diphosphate + H(+). Its pathway is amino-acid biosynthesis; L-histidine biosynthesis; L-histidine from 5-phospho-alpha-D-ribose 1-diphosphate: step 2/9. The polypeptide is Phosphoribosyl-ATP pyrophosphatase (Halobacterium salinarum (strain ATCC 29341 / DSM 671 / R1)).